The following is a 216-amino-acid chain: Somatotropin (216 aa).

Positions Met1–Ala26 are cleaved as a signal peptide. Zn(2+) is bound at residue His45. A disulfide bond links Cys78 and Cys189. Residue Ser131 is modified to Phosphoserine. Glu198 contributes to the Zn(2+) binding site. The cysteines at positions 206 and 214 are disulfide-linked.

It belongs to the somatotropin/prolactin family.

The protein localises to the secreted. Functionally, plays an important role in growth control. Its major role in stimulating body growth is to stimulate the liver and other tissues to secrete IGF1. It stimulates both the differentiation and proliferation of myoblasts. It also stimulates amino acid uptake and protein synthesis in muscle and other tissues. In Balaenoptera physalus (Fin whale), this protein is Somatotropin (GH1).